A 379-amino-acid polypeptide reads, in one-letter code: MAPNIRKSHPLLKIINSSLIDLPSPSNISTWWNFGSLLGICLITQILTGLLLAMHYTADTSLAFSSVAHTCRNVQYGWLIRNLHANGASFFFICIYLHIGRGFYYGSYLYKETWNTGVILLLTLMATAFVGYVLPWGQMSFWGATVITNLFSAIPYIGQTLVEWAWGGFSVDNPTLTRFFALHFLLPFLIAGITLIHLTFLHESGSNNPLGIVSHCDKIPFHPYFSLKDILGFTLMFIPLLILAFFSPNFLGDPENFTPANPLVTPPHIKPEWYFLFAYAILRSIPNKLGGVLALAASVLILFLIPFLHKSKQRSMTFRPLSQVLFWFLVANLLILTWIGSQPVEHPFIIIGQMASFTYFLILLILFPTIGDLENKMLY.

A run of 4 helical transmembrane segments spans residues 34-54 (FGSLLGICLITQILTGLLLAM), 78-99 (WLIRNLHANGASFFFICIYLHI), 114-134 (WNTGVILLLTLMATAFVGYVL), and 179-199 (FFALHFLLPFLIAGITLIHLT). H84 and H98 together coordinate heme b. Positions 183 and 197 each coordinate heme b. H202 provides a ligand contact to a ubiquinone. 4 consecutive transmembrane segments (helical) span residues 227–247 (LKDILGFTLMFIPLLILAFFS), 289–309 (LGGVLALAASVLILFLIPFLH), 321–341 (LSQVLFWFLVANLLILTWIGS), and 348–368 (FIIIGQMASFTYFLILLILFP).

Belongs to the cytochrome b family. The cytochrome bc1 complex contains 11 subunits: 3 respiratory subunits (MT-CYB, CYC1 and UQCRFS1), 2 core proteins (UQCRC1 and UQCRC2) and 6 low-molecular weight proteins (UQCRH/QCR6, UQCRB/QCR7, UQCRQ/QCR8, UQCR10/QCR9, UQCR11/QCR10 and a cleavage product of UQCRFS1). This cytochrome bc1 complex then forms a dimer. Heme b serves as cofactor.

The protein localises to the mitochondrion inner membrane. In terms of biological role, component of the ubiquinol-cytochrome c reductase complex (complex III or cytochrome b-c1 complex) that is part of the mitochondrial respiratory chain. The b-c1 complex mediates electron transfer from ubiquinol to cytochrome c. Contributes to the generation of a proton gradient across the mitochondrial membrane that is then used for ATP synthesis. This Casuarius bennetti (Dwarf cassowary) protein is Cytochrome b (MT-CYB).